The following is a 117-amino-acid chain: Probable prefoldin subunit 1 (117 aa).

It belongs to the prefoldin subunit beta family. As to quaternary structure, heterohexamer of two PFD-alpha type and four PFD-beta type subunits. In terms of tissue distribution, expressed in the distal cell tip of developing embryos.

The protein localises to the cytoplasm. Its function is as follows. Binds specifically to cytosolic chaperonin (c-CPN) and transfers target proteins to it. Binds to nascent polypeptide chain and promotes folding in an environment in which there are many competing pathways for nonnative proteins. Has a role in gonadogenesis. This chain is Probable prefoldin subunit 1 (pfd-1), found in Caenorhabditis elegans.